A 447-amino-acid polypeptide reads, in one-letter code: tRNA-2-methylthio-N(6)-dimethylallyladenosine synthase (447 aa).

The region spanning 1 to 116 (MYIRTFGCQM…LPDLIKRRRA (116 aa)) is the MTTase N-terminal domain. 6 residues coordinate [4Fe-4S] cluster: Cys8, Cys45, Cys79, Cys153, Cys157, and Cys160. A Radical SAM core domain is found at 139–372 (RVDGATAFVS…QALINQQAAA (234 aa)). Positions 375 to 438 (QGMIGTRQRV…TNSLRGRVAG (64 aa)) constitute a TRAM domain.

This sequence belongs to the methylthiotransferase family. MiaB subfamily. As to quaternary structure, monomer. [4Fe-4S] cluster serves as cofactor.

It localises to the cytoplasm. The catalysed reaction is N(6)-dimethylallyladenosine(37) in tRNA + (sulfur carrier)-SH + AH2 + 2 S-adenosyl-L-methionine = 2-methylsulfanyl-N(6)-dimethylallyladenosine(37) in tRNA + (sulfur carrier)-H + 5'-deoxyadenosine + L-methionine + A + S-adenosyl-L-homocysteine + 2 H(+). Its function is as follows. Catalyzes the methylthiolation of N6-(dimethylallyl)adenosine (i(6)A), leading to the formation of 2-methylthio-N6-(dimethylallyl)adenosine (ms(2)i(6)A) at position 37 in tRNAs that read codons beginning with uridine. This is tRNA-2-methylthio-N(6)-dimethylallyladenosine synthase from Bordetella pertussis (strain Tohama I / ATCC BAA-589 / NCTC 13251).